Reading from the N-terminus, the 78-residue chain is U7-lycotoxin-Ls1a (78 aa).

The signal sequence occupies residues 1-22 (MKLIIFTGLALLLIVSLIDVEA). A propeptide spanning residues 23–26 (QNEG) is cleaved from the precursor.

This sequence belongs to the neurotoxin 19 (CSTX) family. 07 (U7-Lctx) subfamily. Contains 4 disulfide bonds. Expressed by the venom gland.

It is found in the secreted. The protein is U7-lycotoxin-Ls1a of Lycosa singoriensis (Wolf spider).